Reading from the N-terminus, the 389-residue chain is cAMP-dependent protein kinase regulatory subunit (389 aa).

Disordered stretches follow at residues 1–57 and 87–110; these read MSEN…KFAG and SVSAESLNPNPTASSNESWTPPYH. Residues 1–128 are dimerization and phosphorylation; the sequence is MSENTFPGRL…RLKKSISGNF (128 aa). Positions 21–31 are enriched in polar residues; sequence AANTEKPSTSH. Basic and acidic residues predominate over residues 34–43; it reads RVTERDEDKV. The residue at position 87 (Ser-87) is a Phosphoserine. Over residues 87–105 the composition is skewed to polar residues; that stretch reads SVSAESLNPNPTASSNESW. 3',5'-cyclic AMP-binding positions include 129-258, Glu-207, Arg-216, 261-377, Glu-327, and Arg-336; these read LFNH…FLEE and LLST…GVEE.

This sequence belongs to the cAMP-dependent kinase regulatory chain family. As to quaternary structure, tetramer, composed of 2 regulatory (R) and 2 catalytic (C) subunits. In the presence of cAMP it dissociates into 2 active monomeric C subunits and an R dimer.

This is cAMP-dependent protein kinase regulatory subunit (pkar) from Blumeria graminis (Powdery mildew).